Here is a 490-residue protein sequence, read N- to C-terminus: Betaine aldehyde dehydrogenase (490 aa).

Residues Lys-174, Glu-177, and 227-232 (GGIETG) each bind NAD(+). Catalysis depends on residues Glu-249 and Cys-283. Glu-384 is a binding site for NAD(+).

This sequence belongs to the aldehyde dehydrogenase family. Homodimer.

It carries out the reaction betaine aldehyde + NAD(+) + H2O = glycine betaine + NADH + 2 H(+). Its pathway is amine and polyamine biosynthesis; betaine biosynthesis via choline pathway; betaine from betaine aldehyde: step 1/1. With respect to regulation, activity is stimulated by low concentrations of salts and by moderate concentrations of glycine betaine. Highly tolerant to high ionic conditions. In vitro, activity is highly stimulated in the presence of proline. In terms of biological role, involved in the biosynthesis of the osmoprotectant glycine betaine from choline. Catalyzes the oxidation of betaine aldehyde to betaine. Shows specificity for betaine aldehyde as substrate. Can use both NAD(+) and NADP(+), but NAD(+) is strongly preferred. The polypeptide is Betaine aldehyde dehydrogenase (Bacillus subtilis (strain 168)).